The primary structure comprises 154 residues: Putative pre-16S rRNA nuclease (154 aa).

Belongs to the YqgF nuclease family.

It localises to the cytoplasm. Its function is as follows. Could be a nuclease involved in processing of the 5'-end of pre-16S rRNA. This chain is Putative pre-16S rRNA nuclease, found in Rickettsia peacockii (strain Rustic).